The following is a 302-amino-acid chain: Recombination-associated protein RdgC (302 aa).

Belongs to the RdgC family.

Its subcellular location is the cytoplasm. It localises to the nucleoid. Its function is as follows. May be involved in recombination. In Halorhodospira halophila (strain DSM 244 / SL1) (Ectothiorhodospira halophila (strain DSM 244 / SL1)), this protein is Recombination-associated protein RdgC.